The following is a 76-amino-acid chain: Putative membrane protein insertion efficiency factor (76 aa).

It belongs to the UPF0161 family.

It localises to the cell inner membrane. Its function is as follows. Could be involved in insertion of integral membrane proteins into the membrane. This is Putative membrane protein insertion efficiency factor from Paraburkholderia phymatum (strain DSM 17167 / CIP 108236 / LMG 21445 / STM815) (Burkholderia phymatum).